Reading from the N-terminus, the 900-residue chain is Protein translocase subunit SecA (900 aa).

Residues glutamine 87, 105 to 109, and aspartate 510 contribute to the ATP site; that span reads GEGKT. Residues 857-890 are disordered; that stretch reads DSLDSLSDGGSDSADGQEYPKVGRNEPCPCGSGK. A compositionally biased stretch (low complexity) spans 860 to 872; that stretch reads DSLSDGGSDSADG. Zn(2+) contacts are provided by cysteine 884, cysteine 886, cysteine 895, and histidine 896.

The protein belongs to the SecA family. In terms of assembly, monomer and homodimer. Part of the essential Sec protein translocation apparatus which comprises SecA, SecYEG and auxiliary proteins SecDF-YajC and YidC. Zn(2+) is required as a cofactor.

It is found in the cell inner membrane. Its subcellular location is the cytoplasm. It carries out the reaction ATP + H2O + cellular proteinSide 1 = ADP + phosphate + cellular proteinSide 2.. Functionally, part of the Sec protein translocase complex. Interacts with the SecYEG preprotein conducting channel. Has a central role in coupling the hydrolysis of ATP to the transfer of proteins into and across the cell membrane, serving both as a receptor for the preprotein-SecB complex and as an ATP-driven molecular motor driving the stepwise translocation of polypeptide chains across the membrane. The chain is Protein translocase subunit SecA from Marinomonas sp. (strain MWYL1).